The chain runs to 108 residues: uncharacterized protein (108 aa).

3 helical membrane-spanning segments follow: residues 26-46, 54-74, and 84-104; these read GAVYTGEFTLYLLFIFGALII, LMTLFGLAALAFSLSVSPLIF, and INYQLFWLSIFLGAIAFCIYM.

It is found in the cell membrane. This is an uncharacterized protein from Methanocaldococcus jannaschii (strain ATCC 43067 / DSM 2661 / JAL-1 / JCM 10045 / NBRC 100440) (Methanococcus jannaschii).